Reading from the N-terminus, the 232-residue chain is Large ribosomal subunit protein uL1 (232 aa).

The protein belongs to the universal ribosomal protein uL1 family. As to quaternary structure, part of the 50S ribosomal subunit.

Binds directly to 23S rRNA. The L1 stalk is quite mobile in the ribosome, and is involved in E site tRNA release. In terms of biological role, protein L1 is also a translational repressor protein, it controls the translation of the L11 operon by binding to its mRNA. The chain is Large ribosomal subunit protein uL1 from Burkholderia ambifaria (strain MC40-6).